The sequence spans 64 residues: Ferredoxin-like protein in nif region (64 aa).

The 29-residue stretch at 2–30 folds into the 4Fe-4S ferredoxin-type domain; it reads AFKIIASQCTQCGACEFECPSGAISFKTD. [4Fe-4S] cluster-binding residues include Cys10, Cys13, Cys16, Cys20, Cys39, Cys42, Cys51, and Cys55.

Requires [4Fe-4S] cluster as cofactor.

In Rhizobium leguminosarum bv. trifolii, this protein is Ferredoxin-like protein in nif region (fdxN).